A 335-amino-acid polypeptide reads, in one-letter code: Pregnancy-specific beta-1-glycoprotein 5 (335 aa).

Positions 1 to 34 (MGPLSAPPCTQHITWKGLLLTASLLNFWNLPITA) are cleaved as a signal peptide. An Ig-like V-type domain is found at 35 to 144 (QVTIEALPPK…TGYFTFNLYL (110 aa)). 2 N-linked (GlcNAc...) asparagine glycosylation sites follow: Asn104 and Asn111. The Cell attachment site motif lies at 127–129 (RGD). Ig-like C2-type domains lie at 147–234 (PKPY…VTLN) and 239–317 (PDLP…KSMT). Disulfide bonds link Cys169–Cys217 and Cys261–Cys301. Asn175 and Asn210 each carry an N-linked (GlcNAc...) asparagine glycan.

The protein belongs to the immunoglobulin superfamily. CEA family. In terms of tissue distribution, synthesized by syncytiotrophoblast of the placenta.

The protein resides in the secreted. The sequence is that of Pregnancy-specific beta-1-glycoprotein 5 (PSG5) from Homo sapiens (Human).